The primary structure comprises 560 residues: E3 SUMO-protein ligase CBX4 (560 aa).

Positions 1–75 (MELPAVGEHV…LMGYRKRGPK (75 aa)) are involved in interaction with H3C15 and H3C1. An interaction with BMI1 region spans residues 1 to 539 (MELPAVGEHV…LSEFKPFFGN (539 aa)). A Chromo domain is found at 11–69 (FAVESIEKKRIRKGRVEYLVKWRGWSPKYNTWEPEENILDPRLLIAFQNRERQEQLMGY). Residues K77, K106, K114, and K125 each participate in a glycyl lysine isopeptide (Lys-Gly) (interchain with G-Cter in SUMO2) cross-link. Positions 92–152 (VLTGLQDSST…PPGKSGKYYY (61 aa)) are disordered. K149 carries the post-translational modification N6-acetyllysine; alternate. A Glycyl lysine isopeptide (Lys-Gly) (interchain with G-Cter in SUMO2); alternate cross-link involves residue K149. Residues K157, K167, and K178 each participate in a glycyl lysine isopeptide (Lys-Gly) (interchain with G-Cter in SUMO2) cross-link. Phosphoserine is present on S182. Residues K191, K205, K212, K223, K249, K268, K278, and K280 each participate in a glycyl lysine isopeptide (Lys-Gly) (interchain with G-Cter in SUMO2) cross-link. The interval 217–243 (AAGAPGKGSEKGPPNGMMPAPKEAVTG) is disordered. Composition is skewed to basic and acidic residues over residues 281–291 (SGEVAEGEARS) and 298–331 (AADE…REEE). The segment at 281 to 404 (SGEVAEGEAR…HHHHHHAVGL (124 aa)) is disordered. Residues K320, K352, and K365 each participate in a glycyl lysine isopeptide (Lys-Gly) (interchain with G-Cter in SUMO2) cross-link. Basic residues predominate over residues 380-401 (PSHHPHPHPHHHHHHHHHHHHA). S467 carries the post-translational modification Phosphoserine. Residue K494 forms a Glycyl lysine isopeptide (Lys-Gly) (interchain with G-Cter in SUMO2); alternate linkage. Residue K494 forms a Glycyl lysine isopeptide (Lys-Gly) (interchain with G-Cter in SUMO); alternate linkage. Residue T497 is modified to Phosphothreonine; by HIPK2. The span at 509 to 521 (AAPTTTAEKPPAE) shows a compositional bias: low complexity. Residues 509-528 (AAPTTTAEKPPAEAQDEPAE) are disordered. The involved in interaction with H3C15 and RNF2 stretch occupies residues 531 to 556 (SEFKPFFGNIIITDVTANCLTVTFKE). The interaction with RNF2 stretch occupies residues 540–560 (IIITDVTANCLTVTFKEYVTV).

In terms of assembly, interacts with histone H3-K9Me3. Interacts with CHTOP. Component of a PRC1-like complex. The composition of the PRC1 complex differs between the PRC1 complex in pluripotent embryonic stem cells containing RNF2, CBX7 and PCGF2, and the PRC1 complex in differentiating cells containing RNF2, CBX2, CBX4 and BMI1. Self-associates. Interacts with SUV39H1 and HIPK2. Interacts with CSNK2B. May interact with H3C15, H3C1 and RNF2. Interacts with SUMO1P1/SUMO5. Interacts with PRDM1/Blimp-1. Ubiquitinated. Ubiquitination regulates the function of the Polycomb group (PcG) multiprotein PRC1-like complex. Deubiquitinated by USP26. In terms of processing, phosphorylated on Thr-497 by HIPK2 upon DNA damage. This phosphorylation stimulates E3 SUMO-protein ligase activity and promotes sumoylation on Lys-494, as well as sumoylation of other target proteins, such as HNRNPK. As to expression, ubiquitous.

The protein localises to the nucleus. It is found in the nucleus speckle. Its pathway is protein modification; protein sumoylation. Functionally, E3 SUMO-protein ligase that catalyzes sumoylation of target proteins by promoting the transfer of SUMO from the E2 enzyme to the substrate. Involved in the sumoylation of HNRNPK, a p53/TP53 transcriptional coactivator, hence indirectly regulates p53/TP53 transcriptional activation resulting in p21/CDKN1A expression. Monosumoylates ZNF131. In terms of biological role, component of a Polycomb group (PcG) multiprotein PRC1-like complex, a complex class required to maintain the transcriptionally repressive state of many genes, including Hox genes, throughout development. PcG PRC1 complex acts via chromatin remodeling and modification of histones; it mediates monoubiquitination of histone H2A 'Lys-119', rendering chromatin heritably changed in its expressibility. Binds to histone H3 trimethylated at 'Lys-9' (H3K9me3). Plays a role in the lineage differentiation of the germ layers in embryonic development. The sequence is that of E3 SUMO-protein ligase CBX4 (CBX4) from Homo sapiens (Human).